A 176-amino-acid polypeptide reads, in one-letter code: Dual-action ribosomal maturation protein DarP (176 aa).

Positions 1-16 (MRLIDPDADLEFDPDS) are enriched in acidic residues. Positions 1-29 (MRLIDPDADLEFDPDSVYDGPSKSQKKRE) are disordered.

It belongs to the DarP family.

The protein localises to the cytoplasm. In terms of biological role, member of a network of 50S ribosomal subunit biogenesis factors which assembles along the 30S-50S interface, preventing incorrect 23S rRNA structures from forming. Promotes peptidyl transferase center (PTC) maturation. In Thiobacillus denitrificans (strain ATCC 25259 / T1), this protein is Dual-action ribosomal maturation protein DarP.